The following is a 508-amino-acid chain: Photosystem II CP47 reaction center protein (508 aa).

6 helical membrane-spanning segments follow: residues 21-36 (AVHI…WAGS), 101-115 (IVFS…IWHW), 140-156 (GIHL…FGAF), 203-218 (IAAG…FHLS), 237-252 (VLSS…AFVV), and 457-472 (TFAL…HGAR).

It belongs to the PsbB/PsbC family. PsbB subfamily. In terms of assembly, PSII is composed of 1 copy each of membrane proteins PsbA, PsbB, PsbC, PsbD, PsbE, PsbF, PsbH, PsbI, PsbJ, PsbK, PsbL, PsbM, PsbT, PsbX, PsbY, PsbZ, Psb30/Ycf12, at least 3 peripheral proteins of the oxygen-evolving complex and a large number of cofactors. It forms dimeric complexes. Requires Binds multiple chlorophylls. PSII binds additional chlorophylls, carotenoids and specific lipids. as cofactor.

Its subcellular location is the plastid. It is found in the chloroplast thylakoid membrane. One of the components of the core complex of photosystem II (PSII). It binds chlorophyll and helps catalyze the primary light-induced photochemical processes of PSII. PSII is a light-driven water:plastoquinone oxidoreductase, using light energy to abstract electrons from H(2)O, generating O(2) and a proton gradient subsequently used for ATP formation. This chain is Photosystem II CP47 reaction center protein, found in Hordeum vulgare (Barley).